A 291-amino-acid polypeptide reads, in one-letter code: 4-hydroxy-tetrahydrodipicolinate synthase (291 aa).

Thr45 provides a ligand contact to pyruvate. Tyr133 acts as the Proton donor/acceptor in catalysis. Lys161 functions as the Schiff-base intermediate with substrate in the catalytic mechanism. Ile203 lines the pyruvate pocket.

The protein belongs to the DapA family. Homotetramer; dimer of dimers.

The protein resides in the cytoplasm. It catalyses the reaction L-aspartate 4-semialdehyde + pyruvate = (2S,4S)-4-hydroxy-2,3,4,5-tetrahydrodipicolinate + H2O + H(+). The protein operates within amino-acid biosynthesis; L-lysine biosynthesis via DAP pathway; (S)-tetrahydrodipicolinate from L-aspartate: step 3/4. Catalyzes the condensation of (S)-aspartate-beta-semialdehyde [(S)-ASA] and pyruvate to 4-hydroxy-tetrahydrodipicolinate (HTPA). This is 4-hydroxy-tetrahydrodipicolinate synthase from Neisseria meningitidis serogroup C (strain 053442).